The sequence spans 85 residues: U4-theraphotoxin-Hhn1m (85 aa).

The first 22 residues, 1-22 (MKVTLIAILTCAAVLVLHTTAA), serve as a signal peptide directing secretion. Residues 23–48 (EELEAESQLVEVGMPDTELAAVDEER) constitute a propeptide that is removed on maturation. 3 disulfides stabilise this stretch: C52-C66, C56-C77, and C71-C82.

The protein belongs to the neurotoxin 12 (Hwtx-2) family. 02 (Hwtx-2) subfamily. Expressed by the venom gland.

Its subcellular location is the secreted. Postsynaptic neurotoxin. The chain is U4-theraphotoxin-Hhn1m from Cyriopagopus hainanus (Chinese bird spider).